Reading from the N-terminus, the 184-residue chain is ATP synthase subunit b, chloroplastic (184 aa).

The helical transmembrane segment at 27–49 (LATNPINLSIVIGVLIFFGKGVL) threads the bilayer.

The protein belongs to the ATPase B chain family. F-type ATPases have 2 components, F(1) - the catalytic core - and F(0) - the membrane proton channel. F(1) has five subunits: alpha(3), beta(3), gamma(1), delta(1), epsilon(1). F(0) has four main subunits: a(1), b(1), b'(1) and c(10-14). The alpha and beta chains form an alternating ring which encloses part of the gamma chain. F(1) is attached to F(0) by a central stalk formed by the gamma and epsilon chains, while a peripheral stalk is formed by the delta, b and b' chains.

Its subcellular location is the plastid. The protein localises to the chloroplast thylakoid membrane. Functionally, f(1)F(0) ATP synthase produces ATP from ADP in the presence of a proton or sodium gradient. F-type ATPases consist of two structural domains, F(1) containing the extramembraneous catalytic core and F(0) containing the membrane proton channel, linked together by a central stalk and a peripheral stalk. During catalysis, ATP synthesis in the catalytic domain of F(1) is coupled via a rotary mechanism of the central stalk subunits to proton translocation. Its function is as follows. Component of the F(0) channel, it forms part of the peripheral stalk, linking F(1) to F(0). This is ATP synthase subunit b, chloroplastic from Lotus japonicus (Lotus corniculatus var. japonicus).